The following is a 336-amino-acid chain: MLESDRLISSQSIVSEDAMDRAIRPLSLSEYVGQDSVSSQMQIFINAARKRNDPLDHVLIFGPPGLGKTTLANIIAHEMGVNIRQTSGPVIERAGDIAAILTNLQQNDVLFIDEIHRLSPVIEEILYPAMEDYKLDIMIGEGPAARSIKLELPPFTLIGATTRAGLLTSPLRDRFGIVQRLEYYSVDSLTKIVARSAHLLGVPTKPEGAREIALRSRGTPRIANRLLRRVRDYSEVKGNGIITVDMAQQALEMLEVDQHGFDLMDRKLLLAVIEHFNGGPVGIDSIAAAIGEEKGTIEDVLEPFLIQQGFLMRTPRGRIATSKAYQHFGFSAIEQE.

Residues 4–184 (SDRLISSQSI…FGIVQRLEYY (181 aa)) are large ATPase domain (RuvB-L). ATP is bound by residues I23, R24, G65, K68, T69, T70, 131–133 (EDY), R174, Y184, and R221. T69 is a Mg(2+) binding site. Positions 185–255 (SVDSLTKIVA…MAQQALEMLE (71 aa)) are small ATPAse domain (RuvB-S). Residues 258 to 336 (QHGFDLMDRK…HFGFSAIEQE (79 aa)) form a head domain (RuvB-H) region. DNA contacts are provided by R313 and R318.

Belongs to the RuvB family. As to quaternary structure, homohexamer. Forms an RuvA(8)-RuvB(12)-Holliday junction (HJ) complex. HJ DNA is sandwiched between 2 RuvA tetramers; dsDNA enters through RuvA and exits via RuvB. An RuvB hexamer assembles on each DNA strand where it exits the tetramer. Each RuvB hexamer is contacted by two RuvA subunits (via domain III) on 2 adjacent RuvB subunits; this complex drives branch migration. In the full resolvosome a probable DNA-RuvA(4)-RuvB(12)-RuvC(2) complex forms which resolves the HJ.

It is found in the cytoplasm. It carries out the reaction ATP + H2O = ADP + phosphate + H(+). Its function is as follows. The RuvA-RuvB-RuvC complex processes Holliday junction (HJ) DNA during genetic recombination and DNA repair, while the RuvA-RuvB complex plays an important role in the rescue of blocked DNA replication forks via replication fork reversal (RFR). RuvA specifically binds to HJ cruciform DNA, conferring on it an open structure. The RuvB hexamer acts as an ATP-dependent pump, pulling dsDNA into and through the RuvAB complex. RuvB forms 2 homohexamers on either side of HJ DNA bound by 1 or 2 RuvA tetramers; 4 subunits per hexamer contact DNA at a time. Coordinated motions by a converter formed by DNA-disengaged RuvB subunits stimulates ATP hydrolysis and nucleotide exchange. Immobilization of the converter enables RuvB to convert the ATP-contained energy into a lever motion, pulling 2 nucleotides of DNA out of the RuvA tetramer per ATP hydrolyzed, thus driving DNA branch migration. The RuvB motors rotate together with the DNA substrate, which together with the progressing nucleotide cycle form the mechanistic basis for DNA recombination by continuous HJ branch migration. Branch migration allows RuvC to scan DNA until it finds its consensus sequence, where it cleaves and resolves cruciform DNA. In Legionella pneumophila (strain Paris), this protein is Holliday junction branch migration complex subunit RuvB.